A 196-amino-acid chain; its full sequence is Holliday junction branch migration complex subunit RuvA (196 aa).

The domain I stretch occupies residues 1 to 65 (MIGNLSGTVD…ENTTQLYGFI (65 aa)). The segment at 66–143 (NKEEQSCLRL…KLETNNNNFY (78 aa)) is domain II. Residues 144–147 (PINE) are flexible linker. The domain III stretch occupies residues 147 to 196 (EDAVSALINLGYEKTKVYDTIKKYKPNLDTKDIIRTALKELSNYEIDIMQ).

This sequence belongs to the RuvA family. In terms of assembly, homotetramer. Forms an RuvA(8)-RuvB(12)-Holliday junction (HJ) complex. HJ DNA is sandwiched between 2 RuvA tetramers; dsDNA enters through RuvA and exits via RuvB. An RuvB hexamer assembles on each DNA strand where it exits the tetramer. Each RuvB hexamer is contacted by two RuvA subunits (via domain III) on 2 adjacent RuvB subunits; this complex drives branch migration. In the full resolvosome a probable DNA-RuvA(4)-RuvB(12)-RuvC(2) complex forms which resolves the HJ.

Its subcellular location is the cytoplasm. Its function is as follows. The RuvA-RuvB-RuvC complex processes Holliday junction (HJ) DNA during genetic recombination and DNA repair, while the RuvA-RuvB complex plays an important role in the rescue of blocked DNA replication forks via replication fork reversal (RFR). RuvA specifically binds to HJ cruciform DNA, conferring on it an open structure. The RuvB hexamer acts as an ATP-dependent pump, pulling dsDNA into and through the RuvAB complex. HJ branch migration allows RuvC to scan DNA until it finds its consensus sequence, where it cleaves and resolves the cruciform DNA. This is Holliday junction branch migration complex subunit RuvA from Wolbachia sp. subsp. Brugia malayi (strain TRS).